A 341-amino-acid polypeptide reads, in one-letter code: Probable alcohol acetyltransferase (341 aa).

A mitochondrion-targeting transit peptide spans 1 to 40; that stretch reads MFASRILRNSAQTLKTELPHKETIKMAYDLHKPRSTAIRH. The AB hydrolase-1 domain maps to 48 to 301; it reads PILFLHGIFG…NSNHDILDQR (254 aa). Active-site charge relay system residues include Ser-121, Asp-145, and His-295.

The protein belongs to the AB hydrolase superfamily.

It localises to the mitochondrion. Its function is as follows. Probable alcohol acetyltransferase that uses acetyl-CoA to synthesize acetate esters from various alcohols. Not involved in the synthesis of ethyl acetate. The polypeptide is Probable alcohol acetyltransferase (EAT2) (Wickerhamomyces anomalus (strain ATCC 58044 / CBS 1984 / NCYC 433 / NRRL Y-366-8) (Yeast)).